Reading from the N-terminus, the 1378-residue chain is Hybrid signal transduction histidine kinase H (1378 aa).

Positions 212-242 form a coiled coil; that stretch reads KEKFKKEELINDFKSRLETLENKIDQRVDER. Residues 243–314 form the PAS domain; it reads IETRFKYVLE…NNNNNNNNNN (72 aa). The tract at residues 294–337 is disordered; sequence YQQHNNNNNNNNNNNNNNNNNNNNNSNNKSPIINSPNTTSPTNT. Positions 298-337 are enriched in low complexity; that stretch reads NNNNNNNNNNNNNNNNNNNNNSNNKSPIINSPNTTSPTNT. The Histidine kinase domain occupies 498–805; the sequence is TMSHEMRTPL…SFHFLVEVFF (308 aa). H501 carries the phosphohistidine; by autocatalysis modification. Low complexity predominate over residues 663-696; the sequence is NNSNNSNNNHNHNNNNNNNNHLNCSGSFNNNGFN. Disordered regions lie at residues 663-717, 905-924, and 1103-1213; these read NNSN…DKHC, TNNNNSNNDNNNNNTTSTTT, and NNSN…HPNP. Residues 697-714 show a composition bias toward basic residues; the sequence is HGHHHHHHHHHHHHHHHD. 2 stretches are compositionally biased toward low complexity: residues 1103 to 1119 and 1136 to 1187; these read NNSNNNINNNNNNSGSS and SPSL…NNNN. Positions 1188–1206 are enriched in polar residues; sequence LNHYNSDSILSSDLSPQQH. In terms of domain architecture, Response regulatory spans 1244-1364; sequence KIMVAEDSLV…ILAVELKRAW (121 aa). D1297 carries the 4-aspartylphosphate modification.

Post-translationally, activation probably requires transfer of a phosphate group between a histidine in the kinase core (transmitter) domain and an aspartate of the receiver domain.

It catalyses the reaction ATP + protein L-histidine = ADP + protein N-phospho-L-histidine.. Its function is as follows. Acts as a receptor histidine kinase for a signal transduction pathway. This protein undergoes an ATP-dependent autophosphorylation at a conserved histidine residue in the kinase core, and a phosphoryl group is then transferred to a conserved aspartate residue in the receiver domain. This chain is Hybrid signal transduction histidine kinase H (dhkH), found in Dictyostelium discoideum (Social amoeba).